The primary structure comprises 254 residues: Low affinity immunoglobulin gamma Fc region receptor III-A (254 aa).

A signal peptide spans 1 to 20 (MWHLLPPSALLLLISSVTKA). Topologically, residues 21–209 (ADPSKAVVLL…IAPLFPLWQQ (189 aa)) are extracellular. 2 Ig-like C2-type domains span residues 23–104 (PSKA…VQLQ) and 121–174 (KGES…YYCR). N-linked (GlcNAc...) asparagine glycans are attached at residues asparagine 42, asparagine 63, asparagine 166, and asparagine 181. 2 cysteine pairs are disulfide-bonded: cysteine 47-cysteine 90 and cysteine 129-cysteine 173. The helical transmembrane segment at 210–230 (IAFCLMMGLLFAVDTGLYFFV) threads the bilayer. The Cytoplasmic segment spans residues 231–254 (RRDLRRSMVHKEEYNFKWSQAQDK).

As to quaternary structure, forms a heterooligomeric complex with ITAM-containing signaling subunits FCER1G. Interacts (via transmembrane domain) with signaling subunits; this interaction is a prerequisite for receptor complex expression on the cell surface and intracellular signal transduction. Binds the Fc region of antigen-complexed IgG. In terms of processing, N-glycosylated. Phosphorylated following receptor ligation.

The protein resides in the cell membrane. In terms of biological role, receptor for the invariable Fc fragment of immunoglobulin gamma (IgG). Binds with intermediate affinity to both IgG2a and IgG2b. Can bind to IgG2a and IgG2b monomers. Does not display binding to IgG1 or IgG3. Recognizes neutralizing virus-specific IgGs displayed on the cell surface of infected cells and triggers antibody-dependent cellular cytotoxicity (ADCC). Confers protection to lethal influenza virus infection. On splenic dendritic cells, uptakes antigen immune complexes and efficiently divert them into MHC class I and II antigen presentation pathways to provide for superior priming of CD4-positive and CD8-positive T cell immune responses. Mediates neutrophil activation by IgG complexes redundantly with FCGR2A. Plays a role in promoting bone resorption by enhancing osteoclast differentiation following binding to IgG2a. Also acts as a receptor for the Fc region of immunoglobulin epsilon (IgE). Binds with low affinity to both the a and b allotypes of IgE. Has also been shown to bind to IgE allotype a only but not to allotype b. Binds aggregated IgE but not the monomeric form and bound monomeric IgG is readily displaced by IgE complexes. Binding to IgE promotes macrophage-mediated phagocytosis, antigen presentation to T cells, production of pro-inflammatory cytokines and the late phase of cutaneous allergic reactions. Mediates enhanced ADCC in response to afucosylated IgGs. The sequence is that of Low affinity immunoglobulin gamma Fc region receptor III-A from Cavia porcellus (Guinea pig).